The chain runs to 306 residues: Recombination-associated protein RdgC (306 aa).

The protein belongs to the RdgC family.

It localises to the cytoplasm. Its subcellular location is the nucleoid. In terms of biological role, may be involved in recombination. This Burkholderia ambifaria (strain MC40-6) protein is Recombination-associated protein RdgC.